Here is a 234-residue protein sequence, read N- to C-terminus: MTHPFLFLKWLVEHFTQGTSLENLEHYGFLVHVTHAWLIMLLLTGVALLLKRRLSEVPGGLQNLVEIVLVELGRLADETMGPKGRRYFPLIATLALFILFSNLIALIPGFAPPTANLNTNAALALAVFGMTHVVGVREHGLKYFKHFVGPVWWLAPLILPIEIIGHLARPLSLALRLFGNMYGHEIVLVIFFTLVPLLLPIPMMLMGILVAFIQTFVFTLLAMIYIAGALEEAH.

Transmembrane regions (helical) follow at residues 29–49, 90–110, 116–136, 147–167, 186–206, and 207–227; these read FLVH…VALL, LIAT…IPGF, NLNT…VVGV, FVGP…IGHL, IVLV…MMLM, and GILV…IYIA.

It belongs to the ATPase A chain family. As to quaternary structure, F-type ATPases have 2 components, CF(1) - the catalytic core - and CF(0) - the membrane proton channel. CF(1) has five subunits: alpha(3), beta(3), gamma(1), delta(1), epsilon(1). CF(0) has three main subunits: a(1), b(2) and c(9-12). The alpha and beta chains form an alternating ring which encloses part of the gamma chain. CF(1) is attached to CF(0) by a central stalk formed by the gamma and epsilon chains, while a peripheral stalk is formed by the delta and b chains.

It localises to the cell inner membrane. In terms of biological role, key component of the proton channel; it plays a direct role in the translocation of protons across the membrane. The protein is ATP synthase subunit a 1 of Syntrophotalea carbinolica (strain DSM 2380 / NBRC 103641 / GraBd1) (Pelobacter carbinolicus).